The chain runs to 290 residues: Phosphonopyruvate hydrolase (290 aa).

Residue 40–44 (WGSGF) participates in substrate binding. Aspartate 54 acts as the Nucleophile in catalysis. Residue aspartate 81 participates in Mg(2+) binding. Residues arginine 155, histidine 186, and arginine 188 each contribute to the substrate site.

Homodimer. Homotetramer. It depends on Co(2+) as a cofactor. Mg(2+) serves as cofactor. The cofactor is Mn(2+).

The enzyme catalyses 3-phosphonopyruvate + H2O = pyruvate + phosphate + H(+). Its activity is regulated as follows. Partially inhibited by EDTA. Activity is restored by Co(2+), and to a lesser extent by Ni(2+) and Mg(2+). Unaffected by Cs(2+) and Ca(2+). Activity is reduced by Mn(2+) and Cu(2+). In terms of biological role, hydrolyzes phosphonopyruvate. Not active towards phosphoenolpyruvate, glycerophosphate, phospho-L-serine or phosphoglycolic acid. In Variovorax sp. (strain Pal2), this protein is Phosphonopyruvate hydrolase.